Consider the following 297-residue polypeptide: N-acetylmuramic acid 6-phosphate etherase (297 aa).

The SIS domain maps to 55 to 218 (AAKRYSKGGR…STGVMIKQGK (164 aa)). Glu-83 acts as the Proton donor in catalysis. Residue Glu-114 is part of the active site.

Belongs to the GCKR-like family. MurNAc-6-P etherase subfamily. Homodimer.

It carries out the reaction N-acetyl-D-muramate 6-phosphate + H2O = N-acetyl-D-glucosamine 6-phosphate + (R)-lactate. Its pathway is amino-sugar metabolism; N-acetylmuramate degradation. In terms of biological role, specifically catalyzes the cleavage of the D-lactyl ether substituent of MurNAc 6-phosphate, producing GlcNAc 6-phosphate and D-lactate. This chain is N-acetylmuramic acid 6-phosphate etherase, found in Lactobacillus gasseri (strain ATCC 33323 / DSM 20243 / BCRC 14619 / CIP 102991 / JCM 1131 / KCTC 3163 / NCIMB 11718 / NCTC 13722 / AM63).